A 203-amino-acid polypeptide reads, in one-letter code: MPAWLSALLAALGGYLLGSIPTGYWVGRCWGGIDLRQAGSGSTGATNVLRTVGKGPALLVLLVDAAKGAAAVALGSALGSPWWVVVAALGAVIGHSRSCWLGFKGGKSVATSLGILLAMAWPVALATFGVWLLGIALTRIVSFSSLLAAVAAPLLMWALGQPLPYLLFALAGGVYVIAAHRRNIERLLAGSEPRIGQKWAQSP.

6 helical membrane passes run 1-21 (MPAW…GSIP), 52-72 (VGKG…AAAV), 73-93 (ALGS…GAVI), 115-135 (ILLA…LLGI), 140-160 (IVSF…WALG), and 161-181 (QPLP…AAHR).

Belongs to the PlsY family. As to quaternary structure, probably interacts with PlsX.

The protein resides in the cell inner membrane. It catalyses the reaction an acyl phosphate + sn-glycerol 3-phosphate = a 1-acyl-sn-glycero-3-phosphate + phosphate. It participates in lipid metabolism; phospholipid metabolism. Catalyzes the transfer of an acyl group from acyl-phosphate (acyl-PO(4)) to glycerol-3-phosphate (G3P) to form lysophosphatidic acid (LPA). This enzyme utilizes acyl-phosphate as fatty acyl donor, but not acyl-CoA or acyl-ACP. The protein is Glycerol-3-phosphate acyltransferase of Synechococcus sp. (strain JA-3-3Ab) (Cyanobacteria bacterium Yellowstone A-Prime).